A 498-amino-acid chain; its full sequence is MRINPTTSDPGVSALEKKNLGRIAQIIGPVLDVTFPPRKMPNIYNALVVKGRDTAGQQINVTCEVQQLLGNNRVRAVAMSATDGLMRGMEVIDTGAPLSVPVGGATLGRIFNVLGEPVDNLGPVDTRTTSPIHRSAPAFIQLDTKLSIFETGIKVVDLLAPYRRGGKIGLFGGAGVGKTVLIMELINNIAKAHGGVSVFGGVGERTREGNDLYMEMKESGVINEQNIAESKVALVYGQMNEPPGARMRVGLTALTMAEYFRDVNEQDVLLFIDNIFRFVQAGSEVSALLGRMPSAVGYQPTLSTEMGSLQERITSTKEGSITSIQAVYVPADDLTDPAPATTFAHLDATTVLSRGLAAKGIYPAVDPLDSTSTMLQPRIVGEEHYETAQRVKQTLQRYKELQDIIAILGLDELSEEDRLTVARARKIERFLSQPFFVAEVFTGSPGKYVGLSETIRGFKLILSGELDGLPEQAFYLVGNIDEATAKATNLEMESKLKQ.

172–179 contributes to the ATP binding site; it reads GGAGVGKT.

It belongs to the ATPase alpha/beta chains family. As to quaternary structure, F-type ATPases have 2 components, CF(1) - the catalytic core - and CF(0) - the membrane proton channel. CF(1) has five subunits: alpha(3), beta(3), gamma(1), delta(1), epsilon(1). CF(0) has four main subunits: a(1), b(1), b'(1) and c(9-12).

It localises to the plastid. The protein resides in the chloroplast thylakoid membrane. The enzyme catalyses ATP + H2O + 4 H(+)(in) = ADP + phosphate + 5 H(+)(out). Its function is as follows. Produces ATP from ADP in the presence of a proton gradient across the membrane. The catalytic sites are hosted primarily by the beta subunits. The sequence is that of ATP synthase subunit beta, chloroplastic from Castanea sativa (Sweet chestnut).